We begin with the raw amino-acid sequence, 153 residues long: Glutamyl-tRNA(Gln) amidotransferase subunit C, mitochondrial (153 aa).

Residues 31–55 (HPTKVPQQPEPNAFPDLDNNTDDDP) form a disordered region.

This sequence belongs to the GatC family. Subunit of the heterotrimeric GatCAB amidotransferase (AdT) complex, composed of A, B and C subunits.

Its subcellular location is the mitochondrion. The enzyme catalyses L-glutamyl-tRNA(Gln) + L-glutamine + ATP + H2O = L-glutaminyl-tRNA(Gln) + L-glutamate + ADP + phosphate + H(+). Functionally, allows the formation of correctly charged Gln-tRNA(Gln) through the transamidation of misacylated Glu-tRNA(Gln) in the mitochondria. The reaction takes place in the presence of glutamine and ATP through an activated gamma-phospho-Glu-tRNA(Gln). The protein is Glutamyl-tRNA(Gln) amidotransferase subunit C, mitochondrial of Drosophila willistoni (Fruit fly).